We begin with the raw amino-acid sequence, 645 residues long: 1,4-alpha-glucan branching enzyme GlgB (645 aa).

Asp-309 functions as the Nucleophile in the catalytic mechanism. Glu-352 functions as the Proton donor in the catalytic mechanism. Positions 619–645 (VKTRKGSKKQDGSKTKVRSNVTSRGKR) are disordered. Polar residues predominate over residues 636–645 (RSNVTSRGKR).

This sequence belongs to the glycosyl hydrolase 13 family. GlgB subfamily. As to quaternary structure, monomer.

It catalyses the reaction Transfers a segment of a (1-&gt;4)-alpha-D-glucan chain to a primary hydroxy group in a similar glucan chain.. It participates in glycan biosynthesis; glycogen biosynthesis. In terms of biological role, catalyzes the formation of the alpha-1,6-glucosidic linkages in glycogen by scission of a 1,4-alpha-linked oligosaccharide from growing alpha-1,4-glucan chains and the subsequent attachment of the oligosaccharide to the alpha-1,6 position. This is 1,4-alpha-glucan branching enzyme GlgB from Bacillus cereus (strain 03BB102).